The sequence spans 56 residues: Prokaryotic ubiquitin-like protein UBact (56 aa).

The disordered stretch occupies residues 1 to 56 (MPDQAQKTRPVGPGPSGGGEGPGSPKVEKPNTEELLKRMRKVDPDQAKRYRQRTGQ). The segment covering 26 to 48 (KVEKPNTEELLKRMRKVDPDQAK) has biased composition (basic and acidic residues). The residue at position 56 (glutamine 56) is a Deamidated glutamine. Residue glutamine 56 forms an Isoglutamyl lysine isopeptide (Gln-Lys) (interchain with K-? in acceptor proteins) linkage.

It belongs to the ubiquitin-like protein UBact family. May be modified by deamidation of its C-terminal glutamine to glutamate by the adjacently encoded deamidase. This could be a prerequisite to the subsequent conjugation, as shown in the other prokaryotic ubiquitin-like protein Pup.

Functionally, may function as a protein modifier covalently attached to lysine residues of substrate proteins. This may serve to target the modified proteins for degradation by proteasomes. The chain is Prokaryotic ubiquitin-like protein UBact from Pedosphaera parvula (strain Ellin514).